The following is a 73-amino-acid chain: Large ribosomal subunit protein bL31 (73 aa).

It belongs to the bacterial ribosomal protein bL31 family. Type A subfamily. In terms of assembly, part of the 50S ribosomal subunit.

Its function is as follows. Binds the 23S rRNA. The polypeptide is Large ribosomal subunit protein bL31 (Bartonella bacilliformis (strain ATCC 35685 / KC583 / Herrer 020/F12,63)).